A 178-amino-acid chain; its full sequence is uncharacterized protein (178 aa).

This is an uncharacterized protein from Sinorhizobium fredii (strain NBRC 101917 / NGR234).